The sequence spans 354 residues: Homeobox-leucine zipper protein HOX27 (354 aa).

Residues 98–175 form a disordered region; that stretch reads SVAAGAPGME…DDEGASARKK (78 aa). A compositionally biased stretch (gly residues) spans 148 to 157; the sequence is QGGGGGGGGE. The segment at residues 171-230 is a DNA-binding region (homeobox); it reads SARKKLRLSKEQSAFLEESFKEHSTLNPKQKVALAKQLNLRPRQVEVWFQNRRARTKLKQ. The segment at 229–273 is leucine-zipper; it reads KQTEVDCEYLKRCCETLTEENRRLHKELAELRALKTARPFYMHLP. Positions 294-323 are disordered; that stretch reads STSAPAAATSPAAAPTAAARTAVASPEPHR.

The protein belongs to the HD-ZIP homeobox family. Class II subfamily. In terms of tissue distribution, expressed in seedlings, roots, stems, leaf sheaths and blades and panicles.

The protein resides in the nucleus. Its function is as follows. Probable transcription factor. The sequence is that of Homeobox-leucine zipper protein HOX27 (HOX27) from Oryza sativa subsp. japonica (Rice).